Reading from the N-terminus, the 41-residue chain is Large ribosomal subunit protein bL36 (41 aa).

It belongs to the bacterial ribosomal protein bL36 family.

In Rhodopseudomonas palustris (strain BisB5), this protein is Large ribosomal subunit protein bL36.